The following is a 414-amino-acid chain: Cytochrome b (414 aa).

The next 2 helical transmembrane spans lie at 40–60 (FFGSLAILTLVIQIVTGVWLA) and 84–104 (GWLIRYMHSTGASMFFIVIYL). Heme b is bound by residues His-91 and His-105. Helical transmembrane passes span 121 to 141 (LLWMIGVVIYLVMMATAFFGY), 154 to 174 (QVIVNLFAAVPVVGEDLSVWV), 188 to 208 (FFAFHFLLPFLLAGLVFLHIV), 252 to 272 (LMGVVVFLAIFGYVMFFNPTM), 294 to 314 (IAPVWYFTPFYAMLRAVPPMY), 317 to 337 (QFPGVVVMFAAILILFVLPWL), 351 to 371 (IFKWATGIFVVSFVALAWLGI), and 378 to 398 (YTLLSQIFTVLYFAYFLLMPI). Residues His-192 and His-206 each contribute to the heme b site.

Belongs to the cytochrome b family. The main subunits of complex b-c1 are: cytochrome b, cytochrome c1 and the Rieske protein. It depends on heme b as a cofactor.

The protein localises to the cell membrane. Component of the ubiquinol-cytochrome c reductase complex (complex III or cytochrome b-c1 complex), which is a respiratory chain that generates an electrochemical potential coupled to ATP synthesis. The chain is Cytochrome b (petB) from Allochromatium vinosum (strain ATCC 17899 / DSM 180 / NBRC 103801 / NCIMB 10441 / D) (Chromatium vinosum).